The chain runs to 224 residues: MSVVITIDGPSGSGKGTICRLIAEASGFELLDSGALYRLTALATVEQGANSADEQQVAGIAASLDIKFIPQEGSTQVMLAGKDVTKAIRAEEIGMLASTVAAYPAVRQALLDRQRAFLTAKGLVADGRDMGTVVFPAAPLKIFLTASAQERANRRVKQLEQAGVASINYEQILSDIEKRDEQDRNRATAPLLPADDAVMLDSTALSIDEVKQQILGLAKARQLF.

9–17 is a binding site for ATP; it reads GPSGSGKGT.

Belongs to the cytidylate kinase family. Type 1 subfamily.

Its subcellular location is the cytoplasm. The enzyme catalyses CMP + ATP = CDP + ADP. It catalyses the reaction dCMP + ATP = dCDP + ADP. This chain is Cytidylate kinase, found in Saccharophagus degradans (strain 2-40 / ATCC 43961 / DSM 17024).